Reading from the N-terminus, the 577-residue chain is MGSRHFEGIYDHVGHFGRFQRVLYFICAFQNISCGIHYLASVFMGVTPHHVCRPPGNVSQVVFHNHSNWSLEDTGALLSSGQKDYVTVQLQNGEIWELSRCSRNKRENTSSLGYEYTGSKKEFPCVDGYIYDQNTWKSTAVTQWNLVCDRKWLAMLIQPLFMFGVLLGSVTFGYFSDRLGRRVVLWATSSSMFLFGIAAAFAVDYYTFMAARFFLAMVASGYLVVGFVYVMEFIGMKSRTWASVHLHSFFAVGTLLVALTGYLVRTWWLYQMILSTVTVPFILCCWVLPETPFWLLSEGRYEEAQKIVDIMAKWNRASSCKLSELLSLDLQGPVSNSPTEVQKHNLSYLFYNWSITKRTLTVWLIWFTGSLGFYSFSLNSVNLGGNEYLNLFLLGVVEIPAYTFVCIAMDKVGRRTVLAYSLFCSALACGVVMVIPQKHYILGVVTAMVGKFAIGAAFGLIYLYTAELYPTIVRSLAVGSGSMVCRLASILAPFSVDLSSIWIFIPQLFVGTMALLSGVLTLKLPETLGKRLATTWEEAAKLESENESKSSKLLLTTNNSGLEKTEAITPRDSGLGE.

A helical membrane pass occupies residues 23–43 (LYFICAFQNISCGIHYLASVF). Asparagine 57, asparagine 65, asparagine 68, and asparagine 108 each carry an N-linked (GlcNAc...) asparagine glycan. Transmembrane regions (helical) follow at residues 152-172 (WLAMLIQPLFMFGVLLGSVTF), 183-203 (VVLWATSSSMFLFGIAAAFAV), 214-234 (FLAMVASGYLVVGFVYVMEFI), 244-264 (VHLHSFFAVGTLLVALTGYLV), and 268-288 (WLYQMILSTVTVPFILCCWVL). Asparagine 345 and asparagine 352 each carry an N-linked (GlcNAc...) asparagine glycan. Transmembrane regions (helical) follow at residues 359-379 (TLTVWLIWFTGSLGFYSFSLN), 389-409 (LNLFLLGVVEIPAYTFVCIAM), 416-436 (TVLAYSLFCSALACGVVMVIP), 441-461 (ILGVVTAMVGKFAIGAAFGLI), 476-496 (LAVGSGSMVCRLASILAPFSV), and 501-521 (IWIFIPQLFVGTMALLSGVLT). Residues 543 to 577 (ESENESKSSKLLLTTNNSGLEKTEAITPRDSGLGE) form a disordered region. N-linked (GlcNAc...) asparagine glycosylation is found at asparagine 546 and asparagine 558. Over residues 551-560 (SKLLLTTNNS) the composition is skewed to low complexity.

Belongs to the major facilitator (TC 2.A.1) superfamily. Organic cation transporter (TC 2.A.1.19) family. Expressed in testis and epididymis (at protein level). Expressed in endometrium (at protein level); highly expressed during the normal secretory phase, but expression is significantly reduced in the proliferative phase. Expressed at lower levels in adult tissues including bone marrow (at protein level). Expressed in hematopoietic cells, including CD34(+) leukocytes. Expressed in fetal liver (at protein level), brain, lung, kidney, heart, skeletal muscle, spleen and thymus. Expressed in leukemia cells. Abundantly expressed in ovarian cancer clear-cell adenocarcinoma.

It is found in the cell membrane. The catalysed reaction is (R)-carnitine(in) = (R)-carnitine(out). It carries out the reaction spermidine(in) = spermidine(out). Facilitative organic cation transporter that mediates the transport of carnitine as well as the polyamine spermidine. Mediates the partially Na(+)-dependent bidirectional transport of carnitine. May mediate L-carnitine secretion from testis epididymal epithelium into the lumen which is involved in the maturation of spermatozoa. The chain is Solute carrier family 22 member 16 from Homo sapiens (Human).